The sequence spans 224 residues: UPF0758 protein Hhal_2301 (224 aa).

In terms of domain architecture, MPN spans 102–224; sequence TLSSPAQTRT…PVSLAERGVL (123 aa). Positions 173, 175, and 186 each coordinate Zn(2+). Positions 173-186 match the JAMM motif motif; it reads HNHPSGITEPSAAD.

Belongs to the UPF0758 family.

The polypeptide is UPF0758 protein Hhal_2301 (Halorhodospira halophila (strain DSM 244 / SL1) (Ectothiorhodospira halophila (strain DSM 244 / SL1))).